Reading from the N-terminus, the 359-residue chain is 4-galactosyl-N-acetylglucosaminide 3-alpha-L-fucosyltransferase 9 (359 aa).

Over 1 to 11 the chain is Cytoplasmic; sequence MTSTSKGILRP. The chain crosses the membrane as a helical; Signal-anchor for type II membrane protein span at residues 12 to 32; sequence FLIVCIILGCFVACLLIYIKP. The Lumenal portion of the chain corresponds to 33-359; it reads TNSWVFSPME…VGNLEKWFWN (327 aa). Residue Asn-62 is glycosylated (N-linked (GlcNAc...) asparagine). Positions 63–168 are acceptor-binding; that stretch reads ETTILVWVWP…RRDSDIQVPY (106 aa). Position 75 (Gln-75) interacts with a beta-D-galactosyl-(1-&gt;4)-N-acetyl-beta-D-glucosaminyl derivative. 3 disulfide bridges follow: Cys-82–Cys-335, Cys-91–Cys-338, and Cys-190–Cys-238. Residue Asn-101 is glycosylated (N-linked (GlcNAc...) asparagine). Glu-137 provides a ligand contact to a beta-D-galactosyl-(1-&gt;4)-N-acetyl-beta-D-glucosaminyl derivative. The active-site Nucleophile is Glu-137. Glu-137 contacts GDP-beta-L-fucose. Asn-153 carries an N-linked (GlcNAc...) asparagine glycan. 11 residues coordinate GDP-beta-L-fucose: Tyr-168, Val-192, Ser-194, Asn-195, Arg-202, Val-226, Tyr-241, Asn-246, Tyr-252, Glu-255, and Lys-256. Positions 169–326 are donor-binding; the sequence is GFLTVSTSPF…NWRKDFTVNL (158 aa). Positions 327 to 359 are acceptor-binding; the sequence is PRFWESHACLACDHVKRHQEYKSVGNLEKWFWN.

This sequence belongs to the glycosyltransferase 10 family. In terms of assembly, homodimer. Post-translationally, N-glycosylated with complex-type N-glycans.

It localises to the golgi apparatus. The protein resides in the trans-Golgi network membrane. Its subcellular location is the golgi apparatus membrane. It catalyses the reaction a beta-D-galactosyl-(1-&gt;4)-N-acetyl-beta-D-glucosaminyl derivative + GDP-beta-L-fucose = a beta-D-galactosyl-(1-&gt;4)-[alpha-L-fucosyl-(1-&gt;3)]-N-acetyl-beta-D-glucosaminyl derivative + GDP + H(+). The enzyme catalyses an alpha-Neu5Ac-(2-&gt;3)-beta-D-Gal-(1-&gt;4)-beta-D-GlcNAc-(1-&gt;3)-beta-D-Gal-(1-&gt;4)-beta-D-GlcNAc derivative + GDP-beta-L-fucose = an alpha-Neu5Ac-(2-&gt;3)-beta-D-Gal-(1-&gt;4)-beta-D-GlcNAc-(1-&gt;3)-beta-D-Gal-(1-&gt;4)-[alpha-L-Fuc-(1-&gt;3)]-beta-D-GlcNAc derivative + GDP + H(+). The catalysed reaction is alpha-N-glycoloylneuraminosyl-(2-&gt;3)-beta-D-galactosyl-(1-&gt;4)-N-acetyl-beta-D-glucosaminyl-(1-&gt;3)-beta-D-galactosyl-(1-&gt;4)-N-acetyl-beta-D-glucosaminyl-(1-&gt;3)-beta-D-galactosyl-(1-&gt;4)-beta-D-glucosyl-(1&lt;-&gt;1')-ceramide + GDP-beta-L-fucose = alpha-N-glycoloylneuraminosyl-(2-&gt;3)-beta-D-galactosyl-(1-&gt;4)-N-acetyl-beta-D-glucosaminyl-(1-&gt;3)-beta-D-galactosyl-(1-&gt;4)-[alpha-L-fucosyl-(1-&gt;3)]-N-acetyl-beta-D-glucosaminyl-(1-&gt;3)-beta-D-galactosyl-(1-&gt;4)-beta-D-glucosyl-(1&lt;-&gt;1')-ceramide + GDP + H(+). It carries out the reaction alpha-D-galactosyl-(1-&gt;3)-beta-D-galactosyl-(1-&gt;4)-N-acetyl-beta-D-glucosaminyl-(1-&gt;3)-beta-D-galactosyl-(1-&gt;4)-beta-D-glucosyl-(1&lt;-&gt;1')-ceramide + GDP-beta-L-fucose = a neolactoside IV(3)-alpha-Gal,III(3)-alpha-Fuc-nLc4Cer + GDP + H(+). It catalyses the reaction a neolactoside nLc4Cer + GDP-beta-L-fucose = a neolactoside III(3)-alpha-Fuc-nLc4Cer + GDP + H(+). The enzyme catalyses an N-acetyl-alpha-neuraminyl-(2-&gt;3)-beta-D-galactosyl-(1-&gt;4)-N-acetyl-beta-D-glucosaminyl derivative + GDP-beta-L-fucose = an alpha-Neu5Ac-(2-&gt;3)-beta-D-Gal-(1-&gt;4)-[alpha-L-Fuc-(1-&gt;3)]-beta-D-GlcNAc derivative + GDP + H(+). The catalysed reaction is beta-D-Gal-(1-&gt;4)-beta-D-GlcNAc-(1-&gt;3)-beta-D-Gal-(1-&gt;4)-D-Glc + GDP-beta-L-fucose = beta-D-Gal-(1-&gt;4)-[alpha-L-Fuc-(1-&gt;3)]-beta-D-GlcNAc-(1-&gt;3)-beta-D-Gal-(1-&gt;4)-D-Glc + GDP + H(+). It carries out the reaction an alpha-L-Fuc-(1-&gt;2)-beta-D-Gal-(1-&gt;4)-beta-D-GlcNAc derivative + GDP-beta-L-fucose = an alpha-L-Fuc-(1-&gt;2)-beta-D-Gal-(1-&gt;4)-[alpha-L-Fuc-(1-&gt;3)]-beta-D-GlcNAc derivative + GDP + H(+). The protein operates within protein modification; protein glycosylation. It functions in the pathway glycolipid biosynthesis. Its activity is regulated as follows. Activated by Mn2+. Functionally, catalyzes alpha(1-&gt;3) linkage of fucosyl moiety transferred from GDP-beta-L-fucose to N-acetyl glucosamine (GlcNAc) within type 2 lactosamine (LacNAc, beta-D-Gal-(1-&gt;4)-beta-D-GlcNAc-) glycan attached to glycolipids and N- or O-linked glycoproteins. Fucosylates distal type 2 LacNAc and its fucosylated (H-type 2 LacNAc) and sialylated (sialyl-type 2 LacNAc) derivatives to form Lewis x (Lex) (CD15) and Lewis y (Ley) antigenic epitopes involved in cell adhesion and differentiation. Generates Lex epitopes in the brain, presumably playing a role in the maintenance of neuronal stemness and neurite outgrowth in progenitor neural cells. Fucosylates the internal type 2 LacNAc unit of the polylactosamine chain to form VIM-2 antigen that serves as recognition epitope for SELE. Can also modify milk oligosaccharides in particular type 2 tetrasaccharide LNnT. The sequence is that of 4-galactosyl-N-acetylglucosaminide 3-alpha-L-fucosyltransferase 9 from Rattus norvegicus (Rat).